Reading from the N-terminus, the 917-residue chain is MFRKARRVNVRKRNDSEEEERERDEEQEPPPLLPPPGTGEEAGPGGGDRAPGGESLLGPGPSPPSALTPGLGAEAGGGFPGGAEPGNGLKPRKRPRENKEVPRASLLSFQDEEEENEEVFKVKKSSYSKKIVKLLKKEYKEDLEKSKIKTELNSSAESEQPLDKTGHVKDTNQEDGVIISEHGEDEMDMESEKEEEKPKTGGAFSNALSSLNVLRPGEIPDAAFIHAARKKRQMARELGDFTPHDNEPGKGRLVREDENDASDDEDDDEKRRIVFSVKEKSQRQKIAEEIGIEGSDDDALVTGEQDEELSRWEQEQIRKGINIPQVQASQPAEVNMYYQNTYQTMPYGSSYGIPYSYTAYGSSDAKSQKTDNTVPFKTPSNEMTPVTIDLVKKQLKDRLDSMKELHKTNRQQHEKHLQSRVDSTRAIERLEGSSGGIGERYKFLQEMRGYVQDLLECFSEKVPLINELESAIHQLYKQRASRLVQRRQDDIKDESSEFSSHSNKALMAPNLDSFGRDRALYQEHAKRRIAEREARRTRRRQAREQTGKMADHLEGLSSDDEETSTDITNFNLEKDRISKESGKVFEDVLESFYSIDCIKSQFEAWRSKYYTSYKDAYIGLCLPKLFNPLIRLQLLTWTPLEAKCRDFENMLWFESLLFYGCEEREQEKDDVDVALLPTIVEKVILPKLTVIAENMWDPFSTTQTSRMVGITLKLINGYPSVVNAENKNTQVYLKALLLRMRRTLDDDVFMPLYPKNVLENKNSGPYLFFQRQFWSSVKLLGNFLQWYGIFSNKTLQELSIDGLLNRYILMAFQNSEYGDDSIKKAQNVINCFPKQWFMNLKGERTISQLENFCRYLVHLADTIYRNSIGCSDVEKRNARENIKQIVKLLASVRALDHAMSVASDHNVKEFKSLIEGK.

Residues 1–11 (MFRKARRVNVR) are compositionally biased toward basic residues. Disordered regions lie at residues 1–123 (MFRK…FKVK), 143–205 (LEKS…GAFS), and 229–275 (RKKR…RIVF). Ser16 carries the phosphoserine modification. A compositionally biased stretch (acidic residues) spans 16–28 (SEEEERERDEEQE). 2 stretches are compositionally biased toward gly residues: residues 40–50 (EEAGPGGGDRA) and 73–85 (AEAG…GAEP). Residue Lys149 forms a Glycyl lysine isopeptide (Lys-Gly) (interchain with G-Cter in SUMO1); alternate linkage. Lys149 participates in a covalent cross-link: Glycyl lysine isopeptide (Lys-Gly) (interchain with G-Cter in SUMO2); alternate. Phosphoserine is present on residues Ser154, Ser155, and Ser158. The segment covering 161-172 (PLDKTGHVKDTN) has biased composition (basic and acidic residues). A compositionally biased stretch (acidic residues) spans 183-193 (GEDEMDMESEK). At Ser191 the chain carries Phosphoserine. The segment covering 234 to 256 (MARELGDFTPHDNEPGKGRLVRE) has biased composition (basic and acidic residues). Residues 257 to 268 (DENDASDDEDDD) are compositionally biased toward acidic residues. Phosphoserine occurs at positions 262 and 295. 2 disordered regions span residues 362 to 381 (SSDA…TPSN) and 530 to 564 (AERE…EETS). Residues 378–558 (TPSNEMTPVT…MADHLEGLSS (181 aa)) are necessary and sufficient for interaction with PAX7. Residues 542 to 554 (AREQTGKMADHLE) are compositionally biased toward basic and acidic residues. 2 positions are modified to phosphoserine: Ser557 and Ser558. Thr563 carries the post-translational modification Phosphothreonine.

The protein belongs to the GCF family. In terms of assembly, interacts with PAX3 and PAX7. Interacts with WDR5; associates with a histone methyltransferase (HMT) complex composed at least of RBBP5, ASH2L, SET1, SET2 and KMT2A/MLL1, KMT2D/MLL2, KMT2C/MLL3 and KMT2B/MLL4 through direct interaction with WDR5. As to expression, ubiquitous.

The protein resides in the nucleus. Its function is as follows. Adapter protein linking the transcription factors PAX3 and PAX7 to the histone methylation machinery and involved in myogenesis. Associates with a histone methyltransferase complex that specifically mediates dimethylation and trimethylation of 'Lys-4' of histone H3. Mediates the recruitment of that complex to the transcription factors PAX3 and PAX7 on chromatin to regulate the expression of genes involved in muscle progenitor cells proliferation including ID3 and CDC20. The sequence is that of PAX3- and PAX7-binding protein 1 (PAXBP1) from Homo sapiens (Human).